Reading from the N-terminus, the 373-residue chain is Beta sliding clamp homolog GriR (373 aa).

The protein belongs to the beta sliding clamp family. In terms of assembly, forms a ring-shaped head-to-tail homodimer around DNA which binds and tethers DNA polymerases and other proteins to the DNA. The DNA replisome complex has a single clamp-loading complex (3 tau and 1 each of delta, delta', psi and chi subunits) which binds 3 Pol III cores (1 core on the leading strand and 2 on the lagging strand) each with a beta sliding clamp dimer. Additional proteins in the replisome are other copies of gamma, psi and chi, Ssb, DNA helicase and RNA primase.

Its subcellular location is the cytoplasm. Its function is as follows. A homolog of the beta sliding clamp protein encoded within the biosynthetic cluster for griselimycin synthesis. Upon expression in S.coelicolor A3(2), which is susceptible to this antibiotic, confers resistance to griselimycin. The beta sliding clamp confers DNA tethering and processivity to DNA polymerases and other proteins. Acts as a clamp, forming a ring around DNA (a reaction catalyzed by the clamp-loading complex) which diffuses in an ATP-independent manner freely and bidirectionally along dsDNA. Initially characterized for its ability to contact the catalytic subunit of DNA polymerase III (Pol III), a complex, multichain enzyme responsible for most of the replicative synthesis in bacteria; Pol III exhibits 3'-5' exonuclease proofreading activity. The beta chain is required for initiation of replication as well as for processivity of DNA replication. The chain is Beta sliding clamp homolog GriR from Streptomyces muensis.